The primary structure comprises 136 residues: Nucleoside diphosphate kinase (136 aa).

The ATP site is built by Lys10, Phe58, Arg86, Thr92, Arg104, and Asn114. Residue His117 is the Pros-phosphohistidine intermediate of the active site.

This sequence belongs to the NDK family. As to quaternary structure, homotetramer. The cofactor is Mg(2+).

Its subcellular location is the cytoplasm. The catalysed reaction is a 2'-deoxyribonucleoside 5'-diphosphate + ATP = a 2'-deoxyribonucleoside 5'-triphosphate + ADP. It catalyses the reaction a ribonucleoside 5'-diphosphate + ATP = a ribonucleoside 5'-triphosphate + ADP. In terms of biological role, major role in the synthesis of nucleoside triphosphates other than ATP. The ATP gamma phosphate is transferred to the NDP beta phosphate via a ping-pong mechanism, using a phosphorylated active-site intermediate. This is Nucleoside diphosphate kinase from Corynebacterium diphtheriae (strain ATCC 700971 / NCTC 13129 / Biotype gravis).